Consider the following 110-residue polypeptide: Large ribosomal subunit protein uL22 (110 aa).

This sequence belongs to the universal ribosomal protein uL22 family. In terms of assembly, part of the 50S ribosomal subunit.

Functionally, this protein binds specifically to 23S rRNA; its binding is stimulated by other ribosomal proteins, e.g. L4, L17, and L20. It is important during the early stages of 50S assembly. It makes multiple contacts with different domains of the 23S rRNA in the assembled 50S subunit and ribosome. Its function is as follows. The globular domain of the protein is located near the polypeptide exit tunnel on the outside of the subunit, while an extended beta-hairpin is found that lines the wall of the exit tunnel in the center of the 70S ribosome. The protein is Large ribosomal subunit protein uL22 of Shewanella baltica (strain OS223).